The sequence spans 424 residues: Zygote arrest protein 1 (424 aa).

Disordered regions lie at residues 125 to 175 and 196 to 313; these read RTLQ…PMRF and GPGP…SPEL. The segment covering 141 to 150 has biased composition (gly residues); sequence GAEGTTGGGS. The segment covering 289-298 has biased composition (basic and acidic residues); sequence RARDGGDGRE. A 3CxxC-type zinc finger spans residues 326 to 409; it reads KYGYYHCKDC…RQDLCGRCKG (84 aa).

The protein belongs to the ZAR1 family. Interacts with YBX2. Post-translationally, ubiquitinated and degradaded by the proteasome during oocyte meiotic maturation, leading to MARDO (mitochondria-associated ribonucleoprotein domain) membraneless compartment dissolution. As to expression, ovary and testis.

It localises to the cytoplasm. It is found in the cytoplasmic ribonucleoprotein granule. MRNA-binding protein that mediates formation of MARDO (mitochondria-associated ribonucleoprotein domain), a membraneless compartment that stores maternal mRNAs in oocytes. MARDO assembly around mitochondria is directed by an increase in mitochondrial membrane potential during oocyte growth. Promotes formation of MARDO phase-separated membraneless compartment by undergoing liquid-liquid phase separation upon binding to maternal mRNAs. Binds to the 3'-UTR of maternal mRNAs. Maternal mRNAs stored in the MARDO are translationally repressed. Essential for female fertility and oocyte-to-embryo transition by coordinating maternal mRNA storage, translation and degradation. This Homo sapiens (Human) protein is Zygote arrest protein 1.